Reading from the N-terminus, the 129-residue chain is Replication initiation control protein YabA (129 aa).

Residues 52–71 form a disordered region; the sequence is LSLTDEATPEPKAETEAEHG. Positions 60 to 71 are enriched in basic and acidic residues; sequence PEPKAETEAEHG. Zn(2+) is bound by residues His103, Cys105, Cys119, and Cys122.

The protein belongs to the YabA family. Homotetramer. Interacts with both DnaA and DnaN, acting as a bridge between these two proteins. The cofactor is Zn(2+).

The protein resides in the cytoplasm. Its subcellular location is the nucleoid. Functionally, involved in control of chromosome replication initiation. Inhibits the cooperative binding of DnaA to the oriC region, thus negatively regulating initiation of chromosome replication. Inhibits the ability of DnaA-ATP to form a helix on DNA; does not disassemble preformed DnaA-DNA helices. Decreases the residence time of DnaA on the chromosome at its binding sites (oriC, replication forks and promoter-binding sites). Tethers DnaA to the replication machinery via the DNA polymerase beta sliding clamp subunit (dnaN). Associates with oriC and other DnaA targets on the chromosome in a DnaA-dependent manner. The sequence is that of Replication initiation control protein YabA from Listeria monocytogenes serotype 4a (strain HCC23).